Consider the following 360-residue polypeptide: Photosystem II protein D1 (360 aa).

The next 3 helical transmembrane spans lie at Y30 to I47, H119 to L134, and W143 to A157. H119 is a binding site for chlorophyll a. W127 lines the pheophytin a pocket. [CaMn4O5] cluster contacts are provided by D171 and E190. The chain crosses the membrane as a helical span at residues F198–L219. H199 is a binding site for chlorophyll a. A quinone is bound by residues H216 and S265–F266. H216 lines the Fe cation pocket. Residue H273 participates in Fe cation binding. Residues F275–M289 traverse the membrane as a helical segment. Residues H333, E334, D343, and A345 each contribute to the [CaMn4O5] cluster site. Residues A346 to G360 constitute a propeptide that is removed on maturation.

This sequence belongs to the reaction center PufL/M/PsbA/D family. In terms of assembly, PSII is composed of 1 copy each of membrane proteins PsbA, PsbB, PsbC, PsbD, PsbE, PsbF, PsbH, PsbI, PsbJ, PsbK, PsbL, PsbM, PsbT, PsbX, PsbY, Psb30/Ycf12, peripheral proteins PsbO, CyanoQ (PsbQ), PsbU, PsbV and a large number of cofactors. It forms dimeric complexes. It depends on The D1/D2 heterodimer binds P680, chlorophylls that are the primary electron donor of PSII, and subsequent electron acceptors. It shares a non-heme iron and each subunit binds pheophytin, quinone, additional chlorophylls, carotenoids and lipids. D1 provides most of the ligands for the Mn4-Ca-O5 cluster of the oxygen-evolving complex (OEC). There is also a Cl(-1) ion associated with D1 and D2, which is required for oxygen evolution. The PSII complex binds additional chlorophylls, carotenoids and specific lipids. as a cofactor. In terms of processing, tyr-162 forms a radical intermediate that is referred to as redox-active TyrZ, YZ or Y-Z. C-terminally processed by CtpA; processing is essential to allow assembly of the oxygen-evolving complex and thus photosynthetic growth.

The protein resides in the cellular thylakoid membrane. The enzyme catalyses 2 a plastoquinone + 4 hnu + 2 H2O = 2 a plastoquinol + O2. In terms of biological role, photosystem II (PSII) is a light-driven water:plastoquinone oxidoreductase that uses light energy to abstract electrons from H(2)O, generating O(2) and a proton gradient subsequently used for ATP formation. It consists of a core antenna complex that captures photons, and an electron transfer chain that converts photonic excitation into a charge separation. The D1/D2 (PsbA/PsbD) reaction center heterodimer binds P680, the primary electron donor of PSII as well as several subsequent electron acceptors. The protein is Photosystem II protein D1 of Prochlorococcus marinus (strain SARG / CCMP1375 / SS120).